A 429-amino-acid chain; its full sequence is Prenyltransferase okaC (429 aa).

Residues Arg101, Lys189, Tyr191, Lys257, Tyr259, Tyr342, Tyr406, and Tyr410 each coordinate dimethylallyl diphosphate.

It belongs to the tryptophan dimethylallyltransferase family.

It catalyses the reaction cyclo(L-Trp-L-Trp) + 2 dimethylallyl diphosphate = cyclo(N(8)-(alpha,alpha-dimethylallyl)-L-Trp-6a-(alpha,alpha-dimethylallyl)-L-Trp) + 2 diphosphate. Its pathway is alkaloid biosynthesis. In terms of biological role, prenyltransferase; part of the gene cluster that mediates the biosynthesis of okaramine B, a prenylated indole alkaloid that possesses an unusual octacyclic ring system, including a four-membered azetidine ring and an eight-membered azocine ring, and that exhibits insecticidal activity against silkworm larvae. Within the pathway, okaC performs asymmetric reverse prenylation of cyclo(L-Trp-L-Trp) at N-1 and C-2' of the indole ring to produce the cyclic prenylated tryptophan dimer cyclo(N8-(alpha,alpha-dimethylallyl)-L-Trp-6a-(alpha,alpha-dime-thylallyl)-L-Trp). The biosynthesis begins with the NRPS okaA that condenses two tryptophan molecules into cyclo(L-Trp-L-Trp). Prenylation by the prenyltransferase okaC then leads to the formation of cyclo(N8-(alpha,alpha-dimethylallyl)-L-Trp-6a-(alpha,alpha-dime-thylallyl)-L-Trp). This is followed by indole 2,3-epoxidation by the FAD-dependent monooxygenase okaB to facilitate the formation of the hexahydropyrrolo[2,3-b]indole (HPI) moiety of okaramine C. The cytochrome P450 monooxygenase okaD then likely catalyzes formation of the eight-membered ring of okaramine A. The dioxygenase okaE further forms the unusual 2-dimethyl-3-methyl-azetidine ring to yield 12-deshydroxyl okaramine E, as well as the hydroxylation of 12-deshydroxyl okaramine E to produce okaramine E. The cytochrome P450 monoxygenase okaG converts 12-deshydroxyl okaramine E into 3-desmethyl okaramine B which is further methylated by the methyltransferase okaF into okaramine B. In a shunt pathway, okaG and okaF together are also able to convert okaramine E into okaramine D. Okaramine H is produced by nonenzymatic conversion from okaramine A. In Penicillium ochrochloron, this protein is Prenyltransferase okaC.